We begin with the raw amino-acid sequence, 129 residues long: Flagellar assembly factor FliW 2 (129 aa).

This sequence belongs to the FliW family. As to quaternary structure, interacts with translational regulator CsrA and flagellin(s).

The protein resides in the cytoplasm. Functionally, acts as an anti-CsrA protein, binds CsrA and prevents it from repressing translation of its target genes, one of which is flagellin. Binds to flagellin and participates in the assembly of the flagellum. The sequence is that of Flagellar assembly factor FliW 2 from Helicobacter pylori (strain HPAG1).